A 189-amino-acid chain; its full sequence is MLMLLRRRCRAWLEIRRLDKELAQSSGLPLELPQIVPNAWNEVVWRLPVPNHPDAFMTASNAAQSDFIVYVNGLAFYRAWLALGVEDSQACPLKQDMPKDRKYPSSAAHFAVGIDSPVPLADVSPTMILGHFAVCFTDGMTRSMWLLAHEVAVFPVLSRDEASAVMLAEHVGVAAPIQVSKLREQCRKI.

Suppression of A.tumefaciens oncogenicity. The sequence is that of Protein osa (osa) from Shigella flexneri.